Reading from the N-terminus, the 1843-residue chain is Nonribosomal peptide synthetase SIDD (1843 aa).

Residues 1–83 (MLSIDDHGGG…QQQQQQQQRS (83 aa)) form a disordered region. Positions 65-81 (QQQQQQQQQQQQQQQQQ) are enriched in low complexity. The interval 133–528 (TYSELEHLST…TEVEHHIQTC (396 aa)) is adenylation 1. Positions 628–647 (KLGATHADEGPQEEPETDAE) are disordered. Positions 641-716 (EPETDAEKKL…AMANKSTSIS (76 aa)) constitute a Carrier 1 domain. At Ser677 the chain carries O-(pantetheine 4'-phosphoryl)serine. The tract at residues 753–1175 (VEDVYPCTPL…ALSDDDAAAL (423 aa)) is condensation 1. The region spanning 1289-1365 (SATSQRQRRL…EMAAVMECTD (77 aa)) is the Carrier 2 domain. At Ser1326 the chain carries O-(pantetheine 4'-phosphoryl)serine. The segment at 1447–1734 (FFDGPVDLRR…LREIAENCGL (288 aa)) is condensation 2.

The protein belongs to the NRP synthetase family. Requires pantetheine 4'-phosphate as cofactor.

It functions in the pathway siderophore biosynthesis. Functionally, nonribosomal peptide synthetase; part of the gene cluster that mediates the biosynthesis of at least 11 siderophores, including beauverichelin A, dimerumic acid (DA), Na-dimethyl coprogen (NADC), eleutherazine B, ferricrocin (FC), fusarinine A, fusarinine C (FsC), metachelin A, mevalonolactone, rhodotorulic acid (RA) and tenellin. This cocktail of siderophores for iron metabolism is essential for virulence, and more specifically for the fungal virulence in penetrating through the host cuticle. Siderophore synthesis is also involved in conidial germination under iron-deficient conditions. SIDC catalyzes the assembly of ferricrocin whereas SIDD catalyzes the assembly of fusarinine C. The protein is Nonribosomal peptide synthetase SIDD of Beauveria bassiana (strain ARSEF 2860) (White muscardine disease fungus).